The primary structure comprises 2256 residues: GON-4-like protein (2256 aa).

Disordered regions lie at residues Met1–Gly56, Pro105–Pro213, and Leu227–Asp266. The span at Glu23–Thr35 shows a compositional bias: basic and acidic residues. Positions Asp40–Asp53 are enriched in polar residues. Residues Thr141–Gly176 are compositionally biased toward basic and acidic residues. Positions Arg242 to Asp254 are enriched in basic residues. Phosphoserine is present on Ser346. The segment covering Glu366–Val395 has biased composition (acidic residues). Disordered stretches follow at residues Glu366 to Glu428, Ser441 to Asp460, and Asp545 to Asp573. Residues Asp545–Thr571 show a composition bias toward acidic residues. The required for interaction with YY1, SIN3A and HDAC1, and transcriptional repression activity stretch occupies residues Glu609 to Phe1363. Ser783 carries the post-translational modification Phosphoserine. Composition is skewed to low complexity over residues Thr947–Ser959 and Pro1094–Leu1115. Disordered regions lie at residues Thr947 to Pro969, Ala1078 to Val1141, Ala1241 to Ser1288, and Ser1360 to Arg1620. The segment covering Lys1119–Ala1135 has biased composition (basic residues). The segment covering Pro1364–Gln1386 has biased composition (basic and acidic residues). Composition is skewed to polar residues over residues Glu1387 to Thr1401 and Leu1429 to Asn1444. Position 1445 is a phosphoserine (Ser1445). Acidic residues predominate over residues Gly1475 to Leu1495. Residues Ser1496–Gln1510 are compositionally biased toward low complexity. Residues Gly1529–Gly1553 are compositionally biased toward acidic residues. Positions Arg1606–Arg1620 are enriched in basic residues. 2 consecutive PAH domains span residues Glu1644–Glu1716 and Glu1726–Leu1797. 2 disordered regions span residues Val1831–Ser1886 and Leu1909–Pro1966. Basic and acidic residues predominate over residues Glu1851–Lys1868. Residues Ser1921 and Ser1994 each carry the phosphoserine modification. Disordered stretches follow at residues Pro2050–Asp2078 and Ile2110–Lys2148. Over residues Arg2111–Glu2129 the composition is skewed to low complexity. Positions Ser2163 to Met2216 constitute a Myb-like domain. Residues Cys2223–Glu2256 are disordered.

Found in a complex with YY1, SIN3A and HDAC1.

The protein resides in the nucleus. Functionally, has transcriptional repressor activity, probably as part of a complex with YY1, SIN3A and HDAC1. Required for B cell lymphopoiesis. This is GON-4-like protein (Gon4l) from Rattus norvegicus (Rat).